Consider the following 508-residue polypeptide: Probable glycine dehydrogenase (decarboxylating) subunit 2 (508 aa).

An N6-(pyridoxal phosphate)lysine modification is found at Lys-277.

Belongs to the GcvP family. C-terminal subunit subfamily. As to quaternary structure, the glycine cleavage system is composed of four proteins: P, T, L and H. In this organism, the P 'protein' is a heterodimer of two subunits. It depends on pyridoxal 5'-phosphate as a cofactor.

The catalysed reaction is N(6)-[(R)-lipoyl]-L-lysyl-[glycine-cleavage complex H protein] + glycine + H(+) = N(6)-[(R)-S(8)-aminomethyldihydrolipoyl]-L-lysyl-[glycine-cleavage complex H protein] + CO2. Functionally, the glycine cleavage system catalyzes the degradation of glycine. The P protein binds the alpha-amino group of glycine through its pyridoxal phosphate cofactor; CO(2) is released and the remaining methylamine moiety is then transferred to the lipoamide cofactor of the H protein. The chain is Probable glycine dehydrogenase (decarboxylating) subunit 2 from Saccharolobus solfataricus (strain ATCC 35092 / DSM 1617 / JCM 11322 / P2) (Sulfolobus solfataricus).